Here is a 250-residue protein sequence, read N- to C-terminus: Protein REVERSION-TO-ETHYLENE SENSITIVITY1 (250 aa).

Helical transmembrane passes span 55 to 75, 200 to 220, and 221 to 241; these read IVWTPLPVVSWLAPFIGHIGL, SVVRSFLPCAVVTSLGVVLVG, and WPFLIGLSSFSLLLFAWFIIA.

As to quaternary structure, interacts with ETR1 through a region corresponding to its ethylene-binding domain. In terms of tissue distribution, strongly expressed in 1-4-day-old seedlings in the apical hook, cotyledons, root vascular tissue, root tip and root hairs, with little or no expression in the hypocotyl. In light-grown seedlings, expression could also be seen in the apex and young leaves, and disappeared from the cotyledons by 10 days. In mature plants, expressed in floral buds, the style of mature flowers, stems and the rachis.

The protein resides in the endoplasmic reticulum membrane. It is found in the golgi apparatus membrane. In terms of biological role, acts at an early step in the ethylene signaling pathway. Positively regulates ETR1, leading to the negative regulation of ethylene responses. The chain is Protein REVERSION-TO-ETHYLENE SENSITIVITY1 (RTE1) from Arabidopsis thaliana (Mouse-ear cress).